Reading from the N-terminus, the 269-residue chain is Shikimate dehydrogenase (NADP(+)) (269 aa).

Residues 14–16 (SVS) and Thr-61 each bind shikimate. The Proton acceptor role is filled by Lys-65. Shikimate contacts are provided by Asn-85 and Asp-98. NADP(+) contacts are provided by residues 120–124 (GAGGA), 143–148 (NRTEEK), and Thr-211. Tyr-213 contacts shikimate. Gly-234 is a binding site for NADP(+).

Belongs to the shikimate dehydrogenase family. Homodimer.

It carries out the reaction shikimate + NADP(+) = 3-dehydroshikimate + NADPH + H(+). It participates in metabolic intermediate biosynthesis; chorismate biosynthesis; chorismate from D-erythrose 4-phosphate and phosphoenolpyruvate: step 4/7. Functionally, involved in the biosynthesis of the chorismate, which leads to the biosynthesis of aromatic amino acids. Catalyzes the reversible NADPH linked reduction of 3-dehydroshikimate (DHSA) to yield shikimate (SA). This Archaeoglobus fulgidus (strain ATCC 49558 / DSM 4304 / JCM 9628 / NBRC 100126 / VC-16) protein is Shikimate dehydrogenase (NADP(+)).